The sequence spans 302 residues: uncharacterized protein (302 aa).

Disordered regions lie at residues 1 to 167 (MPCR…QSSE) and 180 to 199 (PSLCPSQTGTASTASPQRAS). The segment covering 39-54 (EESHAPSRDPRDHQGS) has biased composition (basic and acidic residues). Polar residues-rich tracts occupy residues 123-133 (LSTSSCASVSR) and 183-197 (CPSQTGTASTASPQR).

This is an uncharacterized protein from Homo sapiens (Human).